The sequence spans 238 residues: Ribonuclease PH (238 aa).

Phosphate contacts are provided by residues R86 and 124–126 (GTR).

Belongs to the RNase PH family. As to quaternary structure, homohexameric ring arranged as a trimer of dimers.

The enzyme catalyses tRNA(n+1) + phosphate = tRNA(n) + a ribonucleoside 5'-diphosphate. Phosphorolytic 3'-5' exoribonuclease that plays an important role in tRNA 3'-end maturation. Removes nucleotide residues following the 3'-CCA terminus of tRNAs; can also add nucleotides to the ends of RNA molecules by using nucleoside diphosphates as substrates, but this may not be physiologically important. Probably plays a role in initiation of 16S rRNA degradation (leading to ribosome degradation) during starvation. The sequence is that of Ribonuclease PH from Cupriavidus metallidurans (strain ATCC 43123 / DSM 2839 / NBRC 102507 / CH34) (Ralstonia metallidurans).